We begin with the raw amino-acid sequence, 72 residues long: Large ribosomal subunit protein uL29 (72 aa).

It belongs to the universal ribosomal protein uL29 family.

This is Large ribosomal subunit protein uL29 (rpmC) from Chlamydia pneumoniae (Chlamydophila pneumoniae).